The chain runs to 77 residues: MTEKQQTFAEAMTALEEIVRQLEQGDVPLENAIDLYKQGMELSKFCHSKLQHAEEQLVSIVQETGETTAFDPLKGEN.

This sequence belongs to the XseB family. As to quaternary structure, heterooligomer composed of large and small subunits.

The protein resides in the cytoplasm. The catalysed reaction is Exonucleolytic cleavage in either 5'- to 3'- or 3'- to 5'-direction to yield nucleoside 5'-phosphates.. In terms of biological role, bidirectionally degrades single-stranded DNA into large acid-insoluble oligonucleotides, which are then degraded further into small acid-soluble oligonucleotides. The polypeptide is Exodeoxyribonuclease 7 small subunit (Lysinibacillus sphaericus (strain C3-41)).